The sequence spans 255 residues: Hydroxyacylglutathione hydrolase (255 aa).

Residues histidine 56, histidine 58, aspartate 60, histidine 61, histidine 114, aspartate 133, and histidine 171 each contribute to the Zn(2+) site.

The protein belongs to the metallo-beta-lactamase superfamily. Glyoxalase II family. As to quaternary structure, monomer. The cofactor is Zn(2+).

It carries out the reaction an S-(2-hydroxyacyl)glutathione + H2O = a 2-hydroxy carboxylate + glutathione + H(+). Its pathway is secondary metabolite metabolism; methylglyoxal degradation; (R)-lactate from methylglyoxal: step 2/2. Its function is as follows. Thiolesterase that catalyzes the hydrolysis of S-D-lactoyl-glutathione to form glutathione and D-lactic acid. This is Hydroxyacylglutathione hydrolase from Cereibacter sphaeroides (strain ATCC 17029 / ATH 2.4.9) (Rhodobacter sphaeroides).